The following is a 221-amino-acid chain: MMYSRKFQILKENIGLYHGDFMDFEVYDTEYMSIIFVKDRLDYTGKEIEPLWAFKTFDIQKDSIVVFRGRMEVTTENMKDLKDIKREKDIKTPIKSEDAINFVVEHFDVIDLKTIYLRQRLLVFIAKEVIESYNIKLKRDGDDLYFEDKKLSVCIACKGTVSAKIHLGINVKSKGAEHVKIIGLEDLGIKDIDKVMREIAINYAKEIDKIERDLRKTLPLI.

This is an uncharacterized protein from Methanocaldococcus jannaschii (strain ATCC 43067 / DSM 2661 / JAL-1 / JCM 10045 / NBRC 100440) (Methanococcus jannaschii).